The primary structure comprises 194 residues: dCTP deaminase (194 aa).

DCTP contacts are provided by residues 110–115, Asp128, 136–138, Tyr171, Lys178, and Gln182; these read RSSLAR and VLE. Catalysis depends on Glu138, which acts as the Proton donor/acceptor.

Belongs to the dCTP deaminase family. Homotrimer.

The enzyme catalyses dCTP + H2O + H(+) = dUTP + NH4(+). It functions in the pathway pyrimidine metabolism; dUMP biosynthesis; dUMP from dCTP (dUTP route): step 1/2. Functionally, catalyzes the deamination of dCTP to dUTP. This chain is dCTP deaminase, found in Glaesserella parasuis serovar 5 (strain SH0165) (Haemophilus parasuis).